A 302-amino-acid chain; its full sequence is 4-hydroxy-tetrahydrodipicolinate synthase (302 aa).

A pyruvate-binding site is contributed by T55. Catalysis depends on Y144, which acts as the Proton donor/acceptor. K172 serves as the catalytic Schiff-base intermediate with substrate. V214 is a pyruvate binding site.

This sequence belongs to the DapA family. As to quaternary structure, homotetramer; dimer of dimers.

The protein localises to the cytoplasm. It catalyses the reaction L-aspartate 4-semialdehyde + pyruvate = (2S,4S)-4-hydroxy-2,3,4,5-tetrahydrodipicolinate + H2O + H(+). The protein operates within amino-acid biosynthesis; L-lysine biosynthesis via DAP pathway; (S)-tetrahydrodipicolinate from L-aspartate: step 3/4. Its function is as follows. Catalyzes the condensation of (S)-aspartate-beta-semialdehyde [(S)-ASA] and pyruvate to 4-hydroxy-tetrahydrodipicolinate (HTPA). This chain is 4-hydroxy-tetrahydrodipicolinate synthase, found in Prochlorococcus marinus (strain NATL2A).